Here is a 101-residue protein sequence, read N- to C-terminus: MAKESMKAREAKRAKLVAKFAEKRAALKVIISDVNASEEDRWNAVLKLQSLPRDSSSSRQRNRCNQTGRPHGYLRKFGLSRIKVRETCMKGEIPGLRKASW.

Belongs to the universal ribosomal protein uS14 family. As to quaternary structure, part of the 30S ribosomal subunit. Contacts proteins S3 and S10.

In terms of biological role, binds 16S rRNA, required for the assembly of 30S particles and may also be responsible for determining the conformation of the 16S rRNA at the A site. The protein is Small ribosomal subunit protein uS14 of Photobacterium profundum (strain SS9).